Consider the following 551-residue polypeptide: Cleavage and polyadenylation specificity factor subunit 6 (551 aa).

The interval 1 to 213 is necessary for interaction with NXF1; the sequence is MADGVDHIDI…RGRFPGAVPG (213 aa). Residues 81 to 161 form the RRM domain; it reads IALYIGNLTW…QNPVVTPCNK (81 aa). The segment at 81 to 161 is necessary for interaction with NUDT21/CPSF5; the sequence is IALYIGNLTW…QNPVVTPCNK (81 aa). Residues 81–161 form a necessary for nuclear paraspeckles localization region; the sequence is IALYIGNLTW…QNPVVTPCNK (81 aa). Position 157 is a phosphothreonine (threonine 157). Residues 169–180 show a composition bias toward polar residues; it reads MQSRKTTQSGQM. Disordered regions lie at residues 169–411 and 477–551; these read MQSR…PLSE and LHGI…YRHR. A GAR motif is present at residues 202–206; the sequence is RGRGR. Over residues 207 to 219 the composition is skewed to low complexity; the sequence is FPGAVPGGDRFPG. Composition is skewed to pro residues over residues 220–265, 285–366, and 377–388; these read PAGP…PLAG, GQPP…PPPT, and GPPPTDPYGRPP. The tract at residues 358–551 is (Microbial infection) Binds to HIV-1 capsid protein p24 (CA); that stretch reads NPAFFPPPTN…RDREREYRHR (194 aa). Residues 389 to 404 are compositionally biased toward basic and acidic residues; that stretch reads PYDRGDYGPPGREMDT. Phosphothreonine occurs at positions 404 and 407. The segment at 404–551 is sufficient for nuclear speckle localization; sequence TARTPLSEAE…RDREREYRHR (148 aa). A necessary for RNA-binding region spans residues 405–551; it reads ARTPLSEAEF…RDREREYRHR (147 aa). The tract at residues 481–551 is necessary for interaction with SRSF3, SRSF7 and TRA2B/SFRS10; sequence ESKSYGSGSR…RDREREYRHR (71 aa). A compositionally biased stretch (basic and acidic residues) spans 489-503; that stretch reads SRRERSRERDHSRSR. The tract at residues 490–551 is arg/Ser-rich domain; it reads RRERSRERDH…RDREREYRHR (62 aa). A phosphoserine mark is found at serine 494, serine 500, serine 511, serine 513, and serine 525. A compositionally biased stretch (basic residues) spans 504–514; it reads EKSRRHKSRSR. The tract at residues 510–551 is sufficient for nuclear targeting; that stretch reads KSRSRDRHDDYYRERSRERERHRDRDRDRDRERDREREYRHR. The segment covering 515-551 has biased composition (basic and acidic residues); that stretch reads DRHDDYYRERSRERERHRDRDRDRDRERDREREYRHR.

The protein belongs to the RRM CPSF6/7 family. In terms of assembly, component of the cleavage factor Im (CFIm) complex which is a heterotetramer composed of two subunits of NUDT21/CPSF5 and two subunits of CPSF6 or CPSF7 or a heterodimer of CPSF6 and CPSF7. The cleavage factor Im (CFIm) complex associates with the CPSF and CSTF complexes to promote the assembly of the core mRNA 3'-processing machinery. Associates with the exon junction complex (EJC). Associates with the 80S ribosome particle. Interacts (via the RRM domain) with NUDT21/CPSF5; this interaction is direct and enhances binding to RNA. Interacts (via Arg/Ser-rich domain) with FIP1L1 (preferentially via unphosphorylated form and Arg/Glu/Asp-rich domain); this interaction mediates, at least in part, the interaction between the CFIm and CPSF complexes and may be inhibited by CPSF6 hyper-phosphorylation. Interacts (via N-terminus) with NXF1; this interaction is direct. Interacts with SRSF3. Interacts with SRSF7. Interacts with SNRNP70. Interacts with TRA2B/SFRS10. Interacts with UPF1. Interacts with UPF3B. Interacts with VIRMA. Interacts (via Arg/Ser-rich domain) with TNPO3; promoting nuclear import of CPSF6 independently of its phosphorylation status. Interacts with YTHDC1. (Microbial infection) Interacts (via C-terminus) with HIV-1 capsid protein p24 (CA). In terms of processing, phosphorylated. Phosphorylated in the Arg/Ser-rich domain by SRPK1, in vitro. Post-translationally, symmetrically dimethylated on arginine residues in the GAR motif by PRMT5 in a WDR77- and CLNS1A-dependent manner. Asymmetrically dimethylated on arginine residues in the GAR motif by PRMT1.

The protein resides in the nucleus. It localises to the nucleoplasm. Its subcellular location is the nucleus speckle. It is found in the cytoplasm. Functionally, component of the cleavage factor Im (CFIm) complex that functions as an activator of the pre-mRNA 3'-end cleavage and polyadenylation processing required for the maturation of pre-mRNA into functional mRNAs. CFIm contributes to the recruitment of multiprotein complexes on specific sequences on the pre-mRNA 3'-end, so called cleavage and polyadenylation signals (pA signals). Most pre-mRNAs contain multiple pA signals, resulting in alternative cleavage and polyadenylation (APA) producing mRNAs with variable 3'-end formation. The CFIm complex acts as a key regulator of cleavage and polyadenylation site choice during APA through its binding to 5'-UGUA-3' elements localized in the 3'-untranslated region (UTR) for a huge number of pre-mRNAs. CPSF6 enhances NUDT21/CPSF5 binding to 5'-UGUA-3' elements localized upstream of pA signals and promotes RNA looping, and hence activates directly the mRNA 3'-processing machinery. Plays a role in mRNA export. Its function is as follows. (Microbial infection) Binds HIV-1 capsid-nucleocapsid (HIV-1 CA-NC) complexes and might thereby promote the integration of the virus in the nucleus of dividing cells (in vitro). In Homo sapiens (Human), this protein is Cleavage and polyadenylation specificity factor subunit 6.